The primary structure comprises 618 residues: Chaperone protein DnaK (618 aa).

Thr175 is modified (phosphothreonine; by autocatalysis). The interval 576-618 (SQNAEPGADGGANSGANPGGTTGNTDTKDDNVVDAEYKVDDDK) is disordered. Residues 583-597 (ADGGANSGANPGGTT) show a composition bias toward gly residues. Basic and acidic residues predominate over residues 601–618 (DTKDDNVVDAEYKVDDDK).

Belongs to the heat shock protein 70 family.

Its function is as follows. Acts as a chaperone. The polypeptide is Chaperone protein DnaK (Clostridium kluyveri (strain NBRC 12016)).